We begin with the raw amino-acid sequence, 274 residues long: MAKGPVATSSDDELPFETEEPVADERSFFGGRPQKPAARNLRPALTASLAAPEHYHGHRERLRDRFRELGDTALADYEILELLLFRLIPRRDTKPIAKALIERFGSLAGVFGAPAALLTEVKGVGENVALDLKLIATVAHRTLKSEIRSKQVLSSWSSVIQYCHAAMAHETREQFRILFLDKRNVLIADEVQGRGTVDHTPVYPREVVKRALELSATAIILVHNHPSGDPTPSRADIDMTKVIIEAAKALDITVHDHIIIGKDGHVSLKGLKLI.

The tract at residues 1 to 37 is disordered; the sequence is MAKGPVATSSDDELPFETEEPVADERSFFGGRPQKPA. Positions 10–22 are enriched in acidic residues; it reads SDDELPFETEEPV. An MPN domain is found at 152 to 274; that stretch reads VLSSWSSVIQ…HVSLKGLKLI (123 aa). Zn(2+) is bound by residues H223, H225, and D236. The JAMM motif motif lies at 223–236; it reads HNHPSGDPTPSRAD.

Belongs to the UPF0758 family.

The protein is UPF0758 protein RHE_CH01848 of Rhizobium etli (strain ATCC 51251 / DSM 11541 / JCM 21823 / NBRC 15573 / CFN 42).